The chain runs to 120 residues: Large ribosomal subunit protein bL20 (120 aa).

Belongs to the bacterial ribosomal protein bL20 family.

Its function is as follows. Binds directly to 23S ribosomal RNA and is necessary for the in vitro assembly process of the 50S ribosomal subunit. It is not involved in the protein synthesizing functions of that subunit. This Methylobacillus flagellatus (strain ATCC 51484 / DSM 6875 / VKM B-1610 / KT) protein is Large ribosomal subunit protein bL20.